Consider the following 368-residue polypeptide: Phosphoserine aminotransferase (368 aa).

Arg44 contributes to the L-glutamate binding site. Pyridoxal 5'-phosphate contacts are provided by residues 78–79 (AT), Trp104, Thr157, Asp179, and Gln202. N6-(pyridoxal phosphate)lysine is present on Lys203. Position 244–245 (244–245 (NT)) interacts with pyridoxal 5'-phosphate.

This sequence belongs to the class-V pyridoxal-phosphate-dependent aminotransferase family. SerC subfamily. Homodimer. The cofactor is pyridoxal 5'-phosphate.

It is found in the cytoplasm. The catalysed reaction is O-phospho-L-serine + 2-oxoglutarate = 3-phosphooxypyruvate + L-glutamate. It catalyses the reaction 4-(phosphooxy)-L-threonine + 2-oxoglutarate = (R)-3-hydroxy-2-oxo-4-phosphooxybutanoate + L-glutamate. It participates in amino-acid biosynthesis; L-serine biosynthesis; L-serine from 3-phospho-D-glycerate: step 2/3. It functions in the pathway cofactor biosynthesis; pyridoxine 5'-phosphate biosynthesis; pyridoxine 5'-phosphate from D-erythrose 4-phosphate: step 3/5. Functionally, catalyzes the reversible conversion of 3-phosphohydroxypyruvate to phosphoserine and of 3-hydroxy-2-oxo-4-phosphonooxybutanoate to phosphohydroxythreonine. The polypeptide is Phosphoserine aminotransferase (Neisseria meningitidis serogroup A / serotype 4A (strain DSM 15465 / Z2491)).